We begin with the raw amino-acid sequence, 124 residues long: U33-theraphotoxin-Cg1c (124 aa).

The signal sequence occupies residues 1–17; sequence MKFAVAIAFTLLVCVFA. 5 disulfide bridges follow: C26–C37, C31–C51, C36–C75, C61–C83, and C77–C94. Over residues 93 to 108 the composition is skewed to basic and acidic residues; sequence RCQEESGKSDKSKESQ. The tract at residues 93–124 is disordered; the sequence is RCQEESGKSDKSKESQGSDESEESEESKESSG. Residues 109–118 show a composition bias toward acidic residues; that stretch reads GSDESEESEE.

This sequence belongs to the neurotoxin 32 family. Expressed by the venom gland.

Its subcellular location is the secreted. This is U33-theraphotoxin-Cg1c from Chilobrachys guangxiensis (Chinese earth tiger tarantula).